A 549-amino-acid chain; its full sequence is Glucose-6-phosphate isomerase (549 aa).

Catalysis depends on E355, which acts as the Proton donor. Active-site residues include H386 and K514.

This sequence belongs to the GPI family.

It is found in the cytoplasm. It carries out the reaction alpha-D-glucose 6-phosphate = beta-D-fructose 6-phosphate. Its pathway is carbohydrate biosynthesis; gluconeogenesis. The protein operates within carbohydrate degradation; glycolysis; D-glyceraldehyde 3-phosphate and glycerone phosphate from D-glucose: step 2/4. Functionally, catalyzes the reversible isomerization of glucose-6-phosphate to fructose-6-phosphate. This chain is Glucose-6-phosphate isomerase, found in Salmonella paratyphi B (strain ATCC BAA-1250 / SPB7).